We begin with the raw amino-acid sequence, 562 residues long: Formate--tetrahydrofolate ligase (562 aa).

ATP is bound at residue 77–84 (TPAGEGKS).

This sequence belongs to the formate--tetrahydrofolate ligase family.

The catalysed reaction is (6S)-5,6,7,8-tetrahydrofolate + formate + ATP = (6R)-10-formyltetrahydrofolate + ADP + phosphate. The protein operates within one-carbon metabolism; tetrahydrofolate interconversion. The sequence is that of Formate--tetrahydrofolate ligase from Corynebacterium jeikeium (strain K411).